Reading from the N-terminus, the 165-residue chain is Thiol peroxidase (165 aa).

The 148-residue stretch at 18-165 (PQVGDVVTDF…PNYDAALAVL (148 aa)) folds into the Thioredoxin domain. Cys-60 functions as the Cysteine sulfenic acid (-SOH) intermediate in the catalytic mechanism. A disulfide bridge connects residues Cys-60 and Cys-94.

The protein belongs to the peroxiredoxin family. Tpx subfamily. Homodimer.

It catalyses the reaction a hydroperoxide + [thioredoxin]-dithiol = an alcohol + [thioredoxin]-disulfide + H2O. In terms of biological role, thiol-specific peroxidase that catalyzes the reduction of hydrogen peroxide and organic hydroperoxides to water and alcohols, respectively. Plays a role in cell protection against oxidative stress by detoxifying peroxides. This is Thiol peroxidase from Pasteurella multocida (strain Pm70).